A 400-amino-acid polypeptide reads, in one-letter code: Phosphoglycerate kinase (400 aa).

Substrate contacts are provided by residues 22-24, Arg-38, 61-64, Arg-119, and Arg-152; these read DFN and HLGR. Residues Lys-205, Gly-296, Glu-327, and 353 to 356 each bind ATP; that span reads GGDT.

Belongs to the phosphoglycerate kinase family. Monomer.

The protein localises to the cytoplasm. The enzyme catalyses (2R)-3-phosphoglycerate + ATP = (2R)-3-phospho-glyceroyl phosphate + ADP. It functions in the pathway carbohydrate degradation; glycolysis; pyruvate from D-glyceraldehyde 3-phosphate: step 2/5. This is Phosphoglycerate kinase from Campylobacter jejuni subsp. jejuni serotype O:23/36 (strain 81-176).